Here is a 161-residue protein sequence, read N- to C-terminus: Protein translocase subunit SecE (161 aa).

The segment covering Met1–Val12 has biased composition (acidic residues). The interval Met1 to Lys80 is disordered. Residues Val133–Thr153 traverse the membrane as a helical segment.

The protein belongs to the SecE/SEC61-gamma family. As to quaternary structure, component of the Sec protein translocase complex. Heterotrimer consisting of SecY, SecE and SecG subunits. The heterotrimers can form oligomers, although 1 heterotrimer is thought to be able to translocate proteins. Interacts with the ribosome. Interacts with SecDF, and other proteins may be involved. Interacts with SecA.

It localises to the cell membrane. Functionally, essential subunit of the Sec protein translocation channel SecYEG. Clamps together the 2 halves of SecY. May contact the channel plug during translocation. The protein is Protein translocase subunit SecE of Mycobacterium bovis (strain ATCC BAA-935 / AF2122/97).